Here is a 269-residue protein sequence, read N- to C-terminus: Formamidopyrimidine-DNA glycosylase (269 aa).

Pro2 (schiff-base intermediate with DNA) is an active-site residue. Residue Glu3 is the Proton donor of the active site. The Proton donor; for beta-elimination activity role is filled by Lys57. The DNA site is built by His90, Arg109, and Lys150. Residues 235–269 form an FPG-type zinc finger; that stretch reads QVYGRKGEPCRVCGTPIVATKHAQRATFYCRQCQK. Arg259 serves as the catalytic Proton donor; for delta-elimination activity.

This sequence belongs to the FPG family. As to quaternary structure, monomer. The cofactor is Zn(2+).

The catalysed reaction is Hydrolysis of DNA containing ring-opened 7-methylguanine residues, releasing 2,6-diamino-4-hydroxy-5-(N-methyl)formamidopyrimidine.. It carries out the reaction 2'-deoxyribonucleotide-(2'-deoxyribose 5'-phosphate)-2'-deoxyribonucleotide-DNA = a 3'-end 2'-deoxyribonucleotide-(2,3-dehydro-2,3-deoxyribose 5'-phosphate)-DNA + a 5'-end 5'-phospho-2'-deoxyribonucleoside-DNA + H(+). Functionally, involved in base excision repair of DNA damaged by oxidation or by mutagenic agents. Acts as a DNA glycosylase that recognizes and removes damaged bases. Has a preference for oxidized purines, such as 7,8-dihydro-8-oxoguanine (8-oxoG). Has AP (apurinic/apyrimidinic) lyase activity and introduces nicks in the DNA strand. Cleaves the DNA backbone by beta-delta elimination to generate a single-strand break at the site of the removed base with both 3'- and 5'-phosphates. This Shigella dysenteriae serotype 1 (strain Sd197) protein is Formamidopyrimidine-DNA glycosylase.